The primary structure comprises 288 residues: Ribosomal RNA small subunit methyltransferase A (288 aa).

Asn18, Leu20, Gly45, Glu66, Asp91, and Asn118 together coordinate S-adenosyl-L-methionine.

This sequence belongs to the class I-like SAM-binding methyltransferase superfamily. rRNA adenine N(6)-methyltransferase family. RsmA subfamily.

It localises to the cytoplasm. The catalysed reaction is adenosine(1518)/adenosine(1519) in 16S rRNA + 4 S-adenosyl-L-methionine = N(6)-dimethyladenosine(1518)/N(6)-dimethyladenosine(1519) in 16S rRNA + 4 S-adenosyl-L-homocysteine + 4 H(+). Specifically dimethylates two adjacent adenosines (A1518 and A1519) in the loop of a conserved hairpin near the 3'-end of 16S rRNA in the 30S particle. May play a critical role in biogenesis of 30S subunits. This Pasteurella multocida (strain Pm70) protein is Ribosomal RNA small subunit methyltransferase A.